Here is a 189-residue protein sequence, read N- to C-terminus: GTP cyclohydrolase 1 (189 aa).

Positions 78, 81, and 150 each coordinate Zn(2+).

The protein belongs to the GTP cyclohydrolase I family. As to quaternary structure, homomer.

The enzyme catalyses GTP + H2O = 7,8-dihydroneopterin 3'-triphosphate + formate + H(+). Its pathway is cofactor biosynthesis; 7,8-dihydroneopterin triphosphate biosynthesis; 7,8-dihydroneopterin triphosphate from GTP: step 1/1. The protein is GTP cyclohydrolase 1 of Listeria monocytogenes serotype 4b (strain CLIP80459).